A 93-amino-acid chain; its full sequence is MNRPTPNFEAIDKKISAFVTNHDNLLDKLLKQQTELLTSEITTNFEVTQQIQEEVAKKTKQHSKNYKWLVTVVLANGVVSLFLLGGLIYLFSK.

Residues 68–88 (WLVTVVLANGVVSLFLLGGLI) form a helical membrane-spanning segment.

The protein localises to the membrane. This is an uncharacterized protein from Mycoplasma pneumoniae (strain ATCC 29342 / M129 / Subtype 1) (Mycoplasmoides pneumoniae).